The following is a 439-amino-acid chain: Tol-Pal system protein TolB (439 aa).

An N-terminal signal peptide occupies residues 1 to 22 (MTKFPRWLAILVGLLFPLSALT).

It belongs to the TolB family. The Tol-Pal system is composed of five core proteins: the inner membrane proteins TolA, TolQ and TolR, the periplasmic protein TolB and the outer membrane protein Pal. They form a network linking the inner and outer membranes and the peptidoglycan layer.

It localises to the periplasm. Its function is as follows. Part of the Tol-Pal system, which plays a role in outer membrane invagination during cell division and is important for maintaining outer membrane integrity. The sequence is that of Tol-Pal system protein TolB from Xylella fastidiosa (strain M12).